A 231-amino-acid polypeptide reads, in one-letter code: PIAGSMVLAAILLKLGGYGMIRMMQILPTTKTDMFMPFIVLALWGAILANLTCLQQTDLKSLIAYSSISHMGLVVAAIIIQTPWGLSGAMALMIAHGFTSSALFCLANTTYERTHTRILIMTRGFHNILPMTTTWWLLANLMNIAIPPSMNFTGEFLIMSALFNWAPTTIILLGLSMLITASYSLHMFLSTQMGPTQLNNQTEPTHSREHLLMTLHLIPLMMISMKPELIT.

The next 6 membrane-spanning stretches (helical) occupy residues Pro-1–Ile-21, Met-34–Leu-54, Ile-63–Gly-85, Ala-89–Tyr-111, Ile-128–Pro-148, and Phe-156–Ser-176.

This sequence belongs to the complex I subunit 4 family.

It localises to the mitochondrion membrane. The catalysed reaction is a ubiquinone + NADH + 5 H(+)(in) = a ubiquinol + NAD(+) + 4 H(+)(out). Functionally, core subunit of the mitochondrial membrane respiratory chain NADH dehydrogenase (Complex I) that is believed to belong to the minimal assembly required for catalysis. Complex I functions in the transfer of electrons from NADH to the respiratory chain. The immediate electron acceptor for the enzyme is believed to be ubiquinone. The chain is NADH-ubiquinone oxidoreductase chain 4 (MT-ND4) from Bothriechis schlegelii (Eyelash palm pitviper).